We begin with the raw amino-acid sequence, 211 residues long: Thymidylate kinase (211 aa).

11–18 is a binding site for ATP; sequence GPDGAGKT.

Belongs to the thymidylate kinase family.

The enzyme catalyses dTMP + ATP = dTDP + ADP. Functionally, phosphorylation of dTMP to form dTDP in both de novo and salvage pathways of dTTP synthesis. This chain is Thymidylate kinase, found in Streptococcus pyogenes serotype M49 (strain NZ131).